We begin with the raw amino-acid sequence, 1339 residues long: Retrotransposon Gag-like protein 9 (1339 aa).

Composition is skewed to polar residues over residues 533-545 (TVPTSGSVSTQKT), 679-693 (SGTKSTSQMTATTSG), and 700-711 (TRLSGPGATSTP). Disordered stretches follow at residues 533–555 (TVPTSGSVSTQKTRAPVSGPMST), 679–711 (SGTKSTSQMTATTSGGIFMPQTRLSGPGATSTP), 845–864 (GVMSIPLTRTPASRAKSRPQ), 880–901 (PATAGISPSPVRSPASSTLSTL), 982–1010 (ATSLPQPRNAASGVIANPPQRAPASGAGS), and 1078–1116 (ATDSGEASTSHTRFTAPGSKSTPHMTSTAPEMKTPPPKE). Residues 891–901 (RSPASSTLSTL) are compositionally biased toward low complexity. Residues 1078–1106 (ATDSGEASTSHTRFTAPGSKSTPHMTSTA) show a composition bias toward polar residues.

The protein is Retrotransposon Gag-like protein 9 of Mus musculus (Mouse).